The following is a 1122-amino-acid chain: Histone deacetylase 5 (1122 aa).

The disordered stretch occupies residues M1–R22. K35 is covalently cross-linked (Glycyl lysine isopeptide (Lys-Gly) (interchain with G-Cter in SUMO2)). A disordered region spans residues K196–L281. Positions D247–A258 are enriched in basic and acidic residues. S259 carries the phosphoserine; by AMPK, CaMK1, SIK1 and PKD/PRKD1 modification. The span at K272 to L281 shows a compositional bias: basic and acidic residues. T292 carries the phosphothreonine; by PKC modification. Disordered stretches follow at residues G302–T343 and M481–S504. The span at N312 to S327 shows a compositional bias: low complexity. Over residues T328–N340 the composition is skewed to polar residues. Low complexity predominate over residues S494–S504. Residue S498 is modified to Phosphoserine; by AMPK, CaMK1, SIK1 and PKD/PRKD1. K533 is modified (N6-acetyllysine). Residues T536–G625 form a disordered region. A compositionally biased stretch (acidic residues) spans S581–E621. Residues S611 and S661 each carry the phosphoserine modification. The segment at G684–Q1028 is histone deacetylase. The Zn(2+) site is built by C696, C698, H704, and C781. H833 is a catalytic residue. Residues E1081 to L1122 carry the Nuclear export signal motif. A disordered region spans residues E1097–L1122. Positions A1104–E1113 are enriched in basic and acidic residues. S1108 is subject to Phosphoserine.

The protein belongs to the histone deacetylase family. HD type 2 subfamily. As to quaternary structure, interacts with AHRR, BAHD1, BCOR, HDAC7, HDAC9, CTBP1, MEF2C, NCOR2, NRIP1, PHB2 and a 14-3-3 chaperone protein. Interacts with BCL6, DDIT3/CHOP, GRK5, KDM5B and MYOCD. Interacts with EP300 in the presence of TFAP2C. Interacts with ANKRA2. Interacts with CUL7 (as part of the 3M complex); negatively regulated by ANKRA2. Interacts with ZBTB7B; the interaction allows the recruitment of HDAC4 on CD8 loci for deacetylation and possible inhibition of CD8 genes expression. Interacts with RARA. Post-translationally, phosphorylated by AMPK, CaMK1, SIK1 and PRKD1 at Ser-259 and Ser-498. The phosphorylation is required for the export to the cytoplasm and inhibition. Phosphorylated by the PKC kinases PKN1 and PKN2, impairing nuclear import. Phosphorylated by GRK5, leading to nuclear export of HDAC5 and allowing MEF2-mediated transcription. Ubiquitinated. Polyubiquitination however does not lead to its degradation.

The protein localises to the nucleus. The protein resides in the cytoplasm. The catalysed reaction is N(6)-acetyl-L-lysyl-[histone] + H2O = L-lysyl-[histone] + acetate. Responsible for the deacetylation of lysine residues on the N-terminal part of the core histones (H2A, H2B, H3 and H4). Histone deacetylation gives a tag for epigenetic repression and plays an important role in transcriptional regulation, cell cycle progression and developmental events. Histone deacetylases act via the formation of large multiprotein complexes. Involved in muscle maturation by repressing transcription of myocyte enhancer MEF2C. During muscle differentiation, it shuttles into the cytoplasm, allowing the expression of myocyte enhancer factors. Serves as a corepressor of RARA and causes its deacetylation. In association with RARA, plays a role in the repression of microRNA-10a and thereby in the inflammatory response. This Pongo abelii (Sumatran orangutan) protein is Histone deacetylase 5 (HDAC5).